Here is a 692-residue protein sequence, read N- to C-terminus: Elongation factor G (692 aa).

Residues 8 to 282 enclose the tr-type G domain; sequence ENTRNIGIMA…AVIDYLPSPL (275 aa). GTP-binding positions include 17-24, 81-85, and 135-138; these read AHIDAGKT, DTPGH, and NKMD.

It belongs to the TRAFAC class translation factor GTPase superfamily. Classic translation factor GTPase family. EF-G/EF-2 subfamily.

It is found in the cytoplasm. In terms of biological role, catalyzes the GTP-dependent ribosomal translocation step during translation elongation. During this step, the ribosome changes from the pre-translocational (PRE) to the post-translocational (POST) state as the newly formed A-site-bound peptidyl-tRNA and P-site-bound deacylated tRNA move to the P and E sites, respectively. Catalyzes the coordinated movement of the two tRNA molecules, the mRNA and conformational changes in the ribosome. This Bacillus thuringiensis subsp. konkukian (strain 97-27) protein is Elongation factor G.